Reading from the N-terminus, the 123-residue chain is Methicillin resistance regulatory protein MecI (123 aa).

A DNA-binding region (H-T-H motif) is located at residues 7 to 71 (EISSAEWEVM…KDNKIFQYYS (65 aa)). Residues 74–123 (EESDIKYKTSKNFINKVYKGGFNSLVLNFVEKEDLSQDEIEELRNILNKK) form an important for dimerization region.

This sequence belongs to the BlaI transcriptional regulatory family. Monomer and homodimer. In terms of processing, upon exposure to beta-lactams, proteolytic cleavage at a single site impairs dimerization and abolishes repressor activity.

The protein localises to the cytoplasm. Its function is as follows. Transcriptional repressor that constitutively blocks the transcription of the gene for the penicillin-binding protein MecA. Binds DNA as a dimer. This chain is Methicillin resistance regulatory protein MecI (mecI), found in Mammaliicoccus sciuri (Staphylococcus sciuri).